A 59-amino-acid polypeptide reads, in one-letter code: UPF0434 protein lpg1920 (59 aa).

The protein belongs to the UPF0434 family.

This chain is UPF0434 protein lpg1920, found in Legionella pneumophila subsp. pneumophila (strain Philadelphia 1 / ATCC 33152 / DSM 7513).